Consider the following 343-residue polypeptide: S-adenosylmethionine:tRNA ribosyltransferase-isomerase (343 aa).

It belongs to the QueA family. As to quaternary structure, monomer.

Its subcellular location is the cytoplasm. It carries out the reaction 7-aminomethyl-7-carbaguanosine(34) in tRNA + S-adenosyl-L-methionine = epoxyqueuosine(34) in tRNA + adenine + L-methionine + 2 H(+). It functions in the pathway tRNA modification; tRNA-queuosine biosynthesis. Transfers and isomerizes the ribose moiety from AdoMet to the 7-aminomethyl group of 7-deazaguanine (preQ1-tRNA) to give epoxyqueuosine (oQ-tRNA). This chain is S-adenosylmethionine:tRNA ribosyltransferase-isomerase, found in Coxiella burnetii (strain Dugway 5J108-111).